Here is an 821-residue protein sequence, read N- to C-terminus: PX domain-containing protein C1450.12 (821 aa).

The PX domain maps to 171 to 310; sequence AYVLGVRQST…SFLTDDPVTL (140 aa). Residues 235-271 are disordered; it reads KDDHDTYLNSSEDSTLSPLPSRSSDTNDPQSDSQHVL. Polar residues predominate over residues 241 to 268; sequence YLNSSEDSTLSPLPSRSSDTNDPQSDSQ. Phosphothreonine occurs at positions 260 and 597. 2 stretches are compositionally biased toward acidic residues: residues 737–746 and 754–766; these read GDEDDQDEND and EHME…EEFD. The segment at 737-766 is disordered; the sequence is GDEDDQDENDQVTKVEEEHMEDDDSVEEFD. At S761 the chain carries Phosphoserine.

It is found in the mitochondrion membrane. The polypeptide is PX domain-containing protein C1450.12 (Schizosaccharomyces pombe (strain 972 / ATCC 24843) (Fission yeast)).